A 50-amino-acid chain; its full sequence is Peptide encoded by miPEP319a (50 aa).

Its function is as follows. Regulatory peptide encoded by the primary transcript (pri-miR319a) of the microRNA miR319a that enhances the accumulation of its corresponding mature miRNA. Acts probably as a transcriptional activator of its corresponding pri-miRNA. The sequence is that of Peptide encoded by miPEP319a from Arabidopsis thaliana (Mouse-ear cress).